The sequence spans 138 residues: Large ribosomal subunit protein uL16 (138 aa).

Over residues 1-13 (MLQPARRKFRKEQ) the composition is skewed to basic residues. The tract at residues 1 to 22 (MLQPARRKFRKEQKGRNTGLAT) is disordered.

It belongs to the universal ribosomal protein uL16 family. Part of the 50S ribosomal subunit.

Functionally, binds 23S rRNA and is also seen to make contacts with the A and possibly P site tRNAs. This Thiobacillus denitrificans (strain ATCC 25259 / T1) protein is Large ribosomal subunit protein uL16.